We begin with the raw amino-acid sequence, 260 residues long: 14-3-3-like protein (260 aa).

A disordered region spans residues 240-260 (DMQDDGGDEIKEAAPKPDEQY). The span at 247–260 (DEIKEAAPKPDEQY) shows a compositional bias: basic and acidic residues.

It belongs to the 14-3-3 family.

This Oenothera elata subsp. hookeri (Hooker's evening primrose) protein is 14-3-3-like protein.